Consider the following 324-residue polypeptide: Dolichyl-phosphate beta-glucosyltransferase (324 aa).

Residues 1–7 (MATLLLQ) lie on the Lumenal side of the membrane. A helical transmembrane segment spans residues 8-28 (LLGLGVALAAAALILVSIVAF). Residues 29 to 324 (ITATKMPPCY…WRLKQTRKAS (296 aa)) are Cytoplasmic-facing.

The protein belongs to the glycosyltransferase 2 family.

Its subcellular location is the endoplasmic reticulum membrane. The enzyme catalyses a di-trans,poly-cis-dolichyl phosphate + UDP-alpha-D-glucose = a di-trans,poly-cis-dolichyl beta-D-glucosyl phosphate + UDP. It participates in protein modification; protein glycosylation. Its function is as follows. Dolichyl-phosphate beta-glucosyltransferase that operates in the biosynthetic pathway of dolichol-linked oligosaccharides, the glycan precursors employed in protein asparagine (N)-glycosylation. The assembly of dolichol-linked oligosaccharides begins on the cytosolic side of the endoplasmic reticulum membrane and finishes in its lumen. The sequential addition of sugars to dolichol pyrophosphate produces dolichol-linked oligosaccharides containing fourteen sugars, including two GlcNAcs, nine mannoses and three glucoses. Once assembled, the oligosaccharide is transferred from the lipid to nascent proteins by oligosaccharyltransferases. Dolichyl-phosphate beta-glucosyltransferase produces dolichyl beta-D-glucosyl phosphate/Dol-P-Glc, the glucose donor substrate used sequentially by ALG6, ALG8 and ALG10 to add glucose residues on top of the Man(9)GlcNAc(2)-PP-Dol structure. These are the three last steps in the biosynthetic pathway of dolichol-linked oligosaccharides to produce Glc(3)Man(9)GlcNAc(2)-PP-Dol. The enzyme is most probably active on the cytoplasmic side of the endoplasmic reticulum while its product Dol-P-Glc is the substrate for ALG6, ALG8 and ALG11 in the lumen of the endoplasmic reticulum. In Mus musculus (Mouse), this protein is Dolichyl-phosphate beta-glucosyltransferase.